A 61-amino-acid polypeptide reads, in one-letter code: Large ribosomal subunit protein uL30 (61 aa).

Belongs to the universal ribosomal protein uL30 family. Part of the 50S ribosomal subunit.

This Corynebacterium glutamicum (strain R) protein is Large ribosomal subunit protein uL30.